Consider the following 844-residue polypeptide: Beta-mannosidase B (844 aa).

The Proton donor role is filled by E432. N723 carries an N-linked (GlcNAc...) asparagine glycan.

The protein belongs to the glycosyl hydrolase 2 family. Beta-mannosidase B subfamily.

It catalyses the reaction Hydrolysis of terminal, non-reducing beta-D-mannose residues in beta-D-mannosides.. It participates in glycan metabolism; N-glycan degradation. Exoglycosidase that cleaves the single beta-linked mannose residue from the non-reducing end of beta-mannosidic oligosaccharides of various complexity and length. Prefers mannobiose over mannotriose and has no activity against polymeric mannan. Is also severely restricted by galactosyl substitutions at the +1 subsite. This chain is Beta-mannosidase B (mndB), found in Aspergillus niger (strain ATCC MYA-4892 / CBS 513.88 / FGSC A1513).